We begin with the raw amino-acid sequence, 507 residues long: ATP synthase subunit alpha, plastid (507 aa).

An ATP-binding site is contributed by 170 to 177 (GDRQTGKT).

This sequence belongs to the ATPase alpha/beta chains family. As to quaternary structure, F-type ATPases have 2 components, CF(1) - the catalytic core - and CF(0) - the membrane proton channel. CF(1) has five subunits: alpha(3), beta(3), gamma(1), delta(1), epsilon(1). CF(0) has four main subunits: a, b, b' and c.

The protein resides in the plastid membrane. It carries out the reaction ATP + H2O + 4 H(+)(in) = ADP + phosphate + 5 H(+)(out). In terms of biological role, produces ATP from ADP in the presence of a proton gradient across the membrane. The alpha chain is a regulatory subunit. This chain is ATP synthase subunit alpha, plastid, found in Cuscuta gronovii (Common dodder).